We begin with the raw amino-acid sequence, 396 residues long: Alpha-galactosidase 2 (396 aa).

An N-terminal signal peptide occupies residues 1–25; that stretch reads MVLLSFSLRFIAFTLTITLTQIADG. 2 disulfides stabilise this stretch: Cys52-Cys84 and Cys132-Cys163. The N-linked (GlcNAc...) asparagine glycan is linked to Asn55. Substrate contacts are provided by residues 82–83 and Lys159; that span reads DD. The Nucleophile role is filled by Asp161. Substrate is bound by residues 194–198, Arg212, and Asp216; that span reads EWGQE. Asp216 acts as the Proton donor in catalysis. 2 N-linked (GlcNAc...) asparagine glycosylation sites follow: Asn343 and Asn354.

This sequence belongs to the glycosyl hydrolase 27 family. In terms of assembly, homodimer.

Its subcellular location is the secreted. It is found in the cell wall. It localises to the extracellular space. The protein resides in the apoplast. It carries out the reaction Hydrolysis of terminal, non-reducing alpha-D-galactose residues in alpha-D-galactosides, including galactose oligosaccharides, galactomannans and galactolipids.. May regulate leaf (and possibly other organ) development by functioning in cell wall loosening and cell wall expansion. The protein is Alpha-galactosidase 2 of Arabidopsis thaliana (Mouse-ear cress).